The primary structure comprises 1382 residues: Hepatocyte growth factor receptor (1382 aa).

The first 24 residues, 1–24, serve as a signal peptide directing secretion; sequence MKAPTALAPGILLLLLTLAQRSHG. The Extracellular portion of the chain corresponds to 25–935; that stretch reads ECKEALVKSE…IVQPDQNFAG (911 aa). The Sema domain occupies 27 to 516; the sequence is KEALVKSEMN…TGKKITKIPL (490 aa). N45 carries N-linked (GlcNAc...) asparagine glycosylation. Intrachain disulfides connect C95–C101, C98–C160, C133–C141, and C173–C176. An N-linked (GlcNAc...) asparagine glycan is attached at N106. N-linked (GlcNAc...) asparagine glycosylation is found at N203 and N359. Disulfide bonds link C299–C364 and C386–C398. N-linked (GlcNAc...) asparagine glycosylation is found at N400 and N406. Intrachain disulfides connect C521-C539, C527-C562, C530-C546, and C542-C552. IPT/TIG domains follow at residues 564-656, 658-740, and 743-837; these read PAVY…FSYV, PVIT…FSYR, and PVVS…LTYV. O-linked (Man) threonine glycosylation is present at T583. Residues N608 and N636 are each glycosylated (N-linked (GlcNAc...) asparagine). Residues T677 and T762 are each glycosylated (O-linked (Man) threonine). Residues N786 and N880 are each glycosylated (N-linked (GlcNAc...) asparagine). A helical membrane pass occupies residues 936-956; the sequence is LIIGAVSISVVVLLVSGLFLW. Residues 957–1379 are Cytoplasmic-facing; it reads LRKRKHKDLG…LPSQDNIDGE (423 aa). The residue at position 967 (S967) is a Phosphoserine. T978 carries the phosphothreonine modification. Residues S991, S998, and S1001 each carry the phosphoserine modification. Phosphotyrosine is present on Y1004. One can recognise a Protein kinase domain in the interval 1079-1346; the sequence is VHFNEVIGRG…RISSIFSTFI (268 aa). ATP is bound by residues 1085-1093 and K1111; that span reads IGRGHFGCV. D1205 acts as the Proton acceptor in catalysis. Positions 1213 to 1382 are interaction with RANBP9; sequence LDEKFTVKVA…QDNIDGEANT (170 aa). Y1231 is modified (phosphotyrosine). 2 positions are modified to phosphotyrosine; by autocatalysis: Y1235 and Y1236. T1290 is modified (phosphothreonine). Residues 1321–1360 form an interaction with MUC20 region; that stretch reads WHPKAEMRPSVSELVSRISSIFSTFIGEHYVHVNATYVNV. A phosphotyrosine; by autocatalysis mark is found at Y1350 and Y1357. The residue at position 1366 (Y1366) is a Phosphotyrosine.

The protein belongs to the protein kinase superfamily. Tyr protein kinase family. In terms of assembly, heterodimer made of an alpha chain (50 kDa) and a beta chain (145 kDa) which are disulfide linked. Binds PLXNB1. Interacts when phosphorylated with downstream effectors including STAT3, PIK3R1, SRC, PCLG1, GRB2 and GAB1. Interacts with SPSB1, SPSB2 and SPSB4. Interacts with INPP5D/SHIP1. When phosphorylated at Tyr-1357, interacts with INPPL1/SHIP2. Interacts with RANBP9 and RANBP10, as well as SPSB1, SPSB2, SPSB3 and SPSB4. SPSB1 binding occurs in the presence and in the absence of HGF, however HGF treatment has a positive effect on this interaction. Interacts with MUC20; prevents interaction with GRB2 and suppresses hepatocyte growth factor-induced cell proliferation. Interacts with GRB10. Interacts with PTPN1 and PTPN2. Interacts with HSP90AA1 and HSP90AB1; the interaction suppresses MET kinase activity. Interacts with tensin TNS3. Interacts (when phosphorylated) with tensin TNS4 (via SH2 domain); the interaction increases MET protein stability by inhibiting MET endocytosis and subsequent lysosomal degradation. In terms of processing, autophosphorylated in response to ligand binding on Tyr-1235 and Tyr-1236 in the kinase domain leading to further phosphorylation of Tyr-1350 and Tyr-1357 in the C-terminal multifunctional docking site. Dephosphorylated by PTPRJ at Tyr-1350 and Tyr-1366. Dephosphorylated by PTPN1 and PTPN2. Ubiquitinated. Ubiquitination by CBL regulates the receptor stability and activity through proteasomal degradation. Post-translationally, O-mannosylation of IPT/TIG domains by TMEM260 is required for protein maturation. O-mannosylated residues are composed of single mannose glycans that are not elongated or modified. Expressed at highest levels in lung, liver and kidney, also expressed in stomach, intestine, spleen, testis and brain. Not expressed in heart or muscle.

The protein localises to the membrane. It catalyses the reaction L-tyrosyl-[protein] + ATP = O-phospho-L-tyrosyl-[protein] + ADP + H(+). With respect to regulation, in its inactive state, the C-terminal tail interacts with the catalytic domain and inhibits the kinase activity. Upon ligand binding, the C-terminal tail is displaced and becomes phosphorylated, thus increasing the kinase activity. Functionally, receptor tyrosine kinase that transduces signals from the extracellular matrix into the cytoplasm by binding to hepatocyte growth factor/HGF ligand. Regulates many physiological processes including proliferation, scattering, morphogenesis and survival. Ligand binding at the cell surface induces autophosphorylation of MET on its intracellular domain that provides docking sites for downstream signaling molecules. Following activation by ligand, interacts with the PI3-kinase subunit PIK3R1, PLCG1, SRC, GRB2, STAT3 or the adapter GAB1. Recruitment of these downstream effectors by MET leads to the activation of several signaling cascades including the RAS-ERK, PI3 kinase-AKT, or PLCgamma-PKC. The RAS-ERK activation is associated with the morphogenetic effects while PI3K/AKT coordinates prosurvival effects. During embryonic development, MET signaling plays a role in gastrulation, development and migration of muscles and neuronal precursors, angiogenesis and kidney formation. In adults, participates in wound healing as well as organ regeneration and tissue remodeling. Also promotes differentiation and proliferation of hematopoietic cells. This Rattus norvegicus (Rat) protein is Hepatocyte growth factor receptor (Met).